Consider the following 293-residue polypeptide: Formamidopyrimidine-DNA glycosylase (293 aa).

Pro2 functions as the Schiff-base intermediate with DNA in the catalytic mechanism. The active-site Proton donor is the Glu3. Lys58 acts as the Proton donor; for beta-elimination activity in catalysis. DNA contacts are provided by His104, Arg123, and Lys166. Residues 257–293 (AAYDREGERCRTDGCGGAVKRFVQNGRSTFWCSGCQK) form an FPG-type zinc finger. The active-site Proton donor; for delta-elimination activity is the Arg283.

Belongs to the FPG family. In terms of assembly, monomer. The cofactor is Zn(2+).

It catalyses the reaction Hydrolysis of DNA containing ring-opened 7-methylguanine residues, releasing 2,6-diamino-4-hydroxy-5-(N-methyl)formamidopyrimidine.. The enzyme catalyses 2'-deoxyribonucleotide-(2'-deoxyribose 5'-phosphate)-2'-deoxyribonucleotide-DNA = a 3'-end 2'-deoxyribonucleotide-(2,3-dehydro-2,3-deoxyribose 5'-phosphate)-DNA + a 5'-end 5'-phospho-2'-deoxyribonucleoside-DNA + H(+). Its function is as follows. Involved in base excision repair of DNA damaged by oxidation or by mutagenic agents. Acts as a DNA glycosylase that recognizes and removes damaged bases. Has a preference for oxidized purines, such as 7,8-dihydro-8-oxoguanine (8-oxoG). Has AP (apurinic/apyrimidinic) lyase activity and introduces nicks in the DNA strand. Cleaves the DNA backbone by beta-delta elimination to generate a single-strand break at the site of the removed base with both 3'- and 5'-phosphates. This is Formamidopyrimidine-DNA glycosylase from Rhodopseudomonas palustris (strain BisB5).